The chain runs to 720 residues: Putative glutamine--fructose-6-phosphate aminotransferase [isomerizing] (720 aa).

Cys-2 functions as the Nucleophile; for GATase activity in the catalytic mechanism. The Glutamine amidotransferase type-2 domain occupies Cys-2–Gly-321. Over residues Ser-266–Pro-280 the composition is skewed to polar residues. A disordered region spans residues Ser-266–Leu-285. 2 SIS domains span residues Trp-393 to Ser-532 and Cys-565 to Pro-710.

It carries out the reaction D-fructose 6-phosphate + L-glutamine = D-glucosamine 6-phosphate + L-glutamate. The protein operates within nucleotide-sugar biosynthesis; UDP-N-acetyl-alpha-D-glucosamine biosynthesis; alpha-D-glucosamine 6-phosphate from D-fructose 6-phosphate: step 1/1. In terms of biological role, involved in amino sugar synthesis (formation of chitin, supplies the amino sugars of asparagine-linked oligosaccharides of glycoproteins). The polypeptide is Putative glutamine--fructose-6-phosphate aminotransferase [isomerizing] (Saccharomyces cerevisiae (strain JAY291) (Baker's yeast)).